The primary structure comprises 295 residues: Phosphatidylserine decarboxylase proenzyme (295 aa).

Active-site charge relay system; for autoendoproteolytic cleavage activity residues include D113, H169, and S256. The active-site Schiff-base intermediate with substrate; via pyruvic acid; for decarboxylase activity is S256. S256 is modified (pyruvic acid (Ser); by autocatalysis).

The protein belongs to the phosphatidylserine decarboxylase family. PSD-B subfamily. Prokaryotic type II sub-subfamily. As to quaternary structure, heterodimer of a large membrane-associated beta subunit and a small pyruvoyl-containing alpha subunit. It depends on pyruvate as a cofactor. Post-translationally, is synthesized initially as an inactive proenzyme. Formation of the active enzyme involves a self-maturation process in which the active site pyruvoyl group is generated from an internal serine residue via an autocatalytic post-translational modification. Two non-identical subunits are generated from the proenzyme in this reaction, and the pyruvate is formed at the N-terminus of the alpha chain, which is derived from the carboxyl end of the proenzyme. The autoendoproteolytic cleavage occurs by a canonical serine protease mechanism, in which the side chain hydroxyl group of the serine supplies its oxygen atom to form the C-terminus of the beta chain, while the remainder of the serine residue undergoes an oxidative deamination to produce ammonia and the pyruvoyl prosthetic group on the alpha chain. During this reaction, the Ser that is part of the protease active site of the proenzyme becomes the pyruvoyl prosthetic group, which constitutes an essential element of the active site of the mature decarboxylase.

The protein localises to the cell membrane. The catalysed reaction is a 1,2-diacyl-sn-glycero-3-phospho-L-serine + H(+) = a 1,2-diacyl-sn-glycero-3-phosphoethanolamine + CO2. The protein operates within phospholipid metabolism; phosphatidylethanolamine biosynthesis; phosphatidylethanolamine from CDP-diacylglycerol: step 2/2. Functionally, catalyzes the formation of phosphatidylethanolamine (PtdEtn) from phosphatidylserine (PtdSer). The sequence is that of Phosphatidylserine decarboxylase proenzyme from Clostridium botulinum (strain Langeland / NCTC 10281 / Type F).